Consider the following 535-residue polypeptide: Inositol 1,4,5-trisphosphate receptor-interacting protein-like 2 (535 aa).

Residues 1–32 form the signal peptide; the sequence is MSVRYTLNLRVFWPLVTGLCTALVCLYHALRS. At 33 to 43 the chain is on the extracellular side; that stretch reads SEDARAESPDG. Residues 44–64 traverse the membrane as a helical segment; the sequence is ADSGFPLLKVAILLLLGYILL. At 65–535 the chain is on the cytoplasmic side; sequence RCRHAIRQRL…RIQGSPEDEP (471 aa). The residue at position 139 (S139) is a Phosphoserine.

The protein belongs to the ITPRIP family.

The protein localises to the membrane. The chain is Inositol 1,4,5-trisphosphate receptor-interacting protein-like 2 (Itpripl2) from Mus musculus (Mouse).